The chain runs to 205 residues: Methylthioribulose-1-phosphate dehydratase (205 aa).

2 residues coordinate Zn(2+): H96 and H98.

It belongs to the aldolase class II family. MtnB subfamily. Zn(2+) serves as cofactor.

It carries out the reaction 5-(methylsulfanyl)-D-ribulose 1-phosphate = 5-methylsulfanyl-2,3-dioxopentyl phosphate + H2O. It participates in amino-acid biosynthesis; L-methionine biosynthesis via salvage pathway; L-methionine from S-methyl-5-thio-alpha-D-ribose 1-phosphate: step 2/6. Catalyzes the dehydration of methylthioribulose-1-phosphate (MTRu-1-P) into 2,3-diketo-5-methylthiopentyl-1-phosphate (DK-MTP-1-P). The protein is Methylthioribulose-1-phosphate dehydratase of Pseudomonas aeruginosa (strain ATCC 15692 / DSM 22644 / CIP 104116 / JCM 14847 / LMG 12228 / 1C / PRS 101 / PAO1).